The chain runs to 1403 residues: Centrosomal protein of 162 kDa (1403 aa).

Residues 19-44 are disordered; sequence ELSDDSFENSNETPSQPNKDRKKKDT. Positions 26 to 35 are enriched in polar residues; the sequence is ENSNETPSQP. Phosphoserine occurs at positions 156 and 159. Disordered regions lie at residues 171–235, 305–342, and 449–586; these read NVEP…EKTG, DTGE…TTES, and NPSL…SDDS. A compositionally biased stretch (basic and acidic residues) spans 176-189; sequence EGGRENESEHKELP. Residues 192–204 show a composition bias toward acidic residues; that stretch reads YSDDFEDAEDTDE. A compositionally biased stretch (basic and acidic residues) spans 206 to 220; that stretch reads LITKDEETRPKENPE. The span at 449–466 shows a compositional bias: polar residues; the sequence is NPSLLPQDNKANQTSRSR. Residue serine 468 is modified to Phosphoserine. A compositionally biased stretch (basic residues) spans 481–496; that stretch reads PCKKARSAPPLPRRKP. A compositionally biased stretch (polar residues) spans 504 to 517; the sequence is ARSSGYSKPSSPLQ. 2 stretches are compositionally biased toward basic and acidic residues: residues 522 to 532 and 567 to 581; these read LEKKTSKDNTK and PHRE…RPED. Coiled coils occupy residues 610 to 1120, 1170 to 1205, and 1234 to 1385; these read KRAQ…MLSR, EVLE…QLES, and CQNA…LHRQ.

This sequence belongs to the CEP162 family. In terms of assembly, interacts with alpha-tubulin. Interacts with CPNE4. Interacts with CEP290.

The protein resides in the cytoplasm. Its subcellular location is the cytoskeleton. It localises to the microtubule organizing center. It is found in the centrosome. The protein localises to the centriole. The protein resides in the spindle. Its subcellular location is the nucleus. Its function is as follows. Required to promote assembly of the transition zone in primary cilia. Acts by specifically recognizing and binding the axonemal microtubule. Localizes to the distal ends of centrioles before ciliogenesis and directly binds to axonemal microtubule, thereby promoting and restricting transition zone formation specifically at the cilia base. Required to mediate CEP290 association with microtubules. This chain is Centrosomal protein of 162 kDa (Cep162), found in Rattus norvegicus (Rat).